The primary structure comprises 673 residues: ATP-dependent zinc metalloprotease FtsH (673 aa).

Over 1–7 the chain is Cytoplasmic; the sequence is MNGFFKN. A helical transmembrane segment spans residues 8-28; the sequence is LSLWLVIGLLMVMLFNLFNSP. The Periplasmic portion of the chain corresponds to 29 to 100; it reads QGPGQSITFS…DVREPEGTPM (72 aa). A helical membrane pass occupies residues 101–121; it reads LMQILISWFPMLLLIAVWIYF. Residues 122–673 lie on the Cytoplasmic side of the membrane; the sequence is MRQMQSGGGR…DTPEGDDKDR (552 aa). 194 to 201 lines the ATP pocket; it reads GPPGTGKT. Residue His-416 participates in Zn(2+) binding. Glu-417 is a catalytic residue. Residues His-420 and Asp-492 each coordinate Zn(2+). Residues 601-673 are disordered; the sequence is ALKPLKKKDE…DTPEGDDKDR (73 aa). Positions 648-660 are enriched in polar residues; that stretch reads STRTATEASTQEV. Over residues 661–673 the composition is skewed to basic and acidic residues; that stretch reads VSKDTPEGDDKDR.

The protein in the central section; belongs to the AAA ATPase family. In the C-terminal section; belongs to the peptidase M41 family. Homohexamer. Zn(2+) is required as a cofactor.

The protein localises to the cell inner membrane. Acts as a processive, ATP-dependent zinc metallopeptidase for both cytoplasmic and membrane proteins. Plays a role in the quality control of integral membrane proteins. In Magnetococcus marinus (strain ATCC BAA-1437 / JCM 17883 / MC-1), this protein is ATP-dependent zinc metalloprotease FtsH.